The sequence spans 899 residues: Probable disease resistance protein RXW24L (899 aa).

A coiled-coil region spans residues 13–50; it reads DRLSQEYDQFKGVEDQVTELKSNLNLLKSFLKDADAKK. The region spanning 143–455 is the NB-ARC domain; sequence LQERQREMRH…AEGISERRRY (313 aa). 189 to 196 lines the ATP pocket; it reads GMGGLGKT.

Belongs to the disease resistance NB-LRR family.

Potential disease resistance protein. In Arabidopsis thaliana (Mouse-ear cress), this protein is Probable disease resistance protein RXW24L (RXW24L).